The chain runs to 218 residues: Glutathione S-transferase (218 aa).

The 87-residue stretch at 2 to 88 (PVTLGYWDIR…YIARKHDLCG (87 aa)) folds into the GST N-terminal domain. Residues 7–8 (YW), 46–50 (WLNEK), 59–60 (NL), and 72–73 (QS) contribute to the glutathione site. The GST C-terminal domain maps to 90–208 (TEEERIQLDI…KSSRFSCKQI (119 aa)). Residue Tyr-116 participates in substrate binding.

Belongs to the GST superfamily. Mu family. As to quaternary structure, homodimer.

It localises to the cytoplasm. The catalysed reaction is RX + glutathione = an S-substituted glutathione + a halide anion + H(+). Conjugation of reduced glutathione to a wide number of exogenous and endogenous hydrophobic electrophiles. The sequence is that of Glutathione S-transferase from Mesocricetus auratus (Golden hamster).